We begin with the raw amino-acid sequence, 264 residues long: Agamous-like MADS-box protein AGL15 (264 aa).

Residues 3 to 57 (RGKIEIKRIENANSRQVTFSKRRAGLLKKAHELSVLCDAEVAVIVFSKSGKLFEF) form the MADS-box domain. In terms of domain architecture, K-box spans 87–177 (NQEECTEVDL…RRQVQELRSF (91 aa)). Residues 223-264 (LQLGLPGEAHDTRKNEGDRESPSSDSVTTSTTRATAQRISLV) form a disordered region. Positions 230–244 (EAHDTRKNEGDRESP) are enriched in basic and acidic residues. Over residues 245–257 (SSDSVTTSTTRAT) the composition is skewed to low complexity.

It is found in the nucleus. In terms of biological role, probable transcription factor. This is Agamous-like MADS-box protein AGL15 (AGL15) from Brassica napus (Rape).